A 147-amino-acid polypeptide reads, in one-letter code: Large ribosomal subunit protein uL16 (147 aa).

Residues 1–16 (MLMPKRVKRRRVHRGR) show a composition bias toward basic residues. A disordered region spans residues 1 to 20 (MLMPKRVKRRRVHRGRMTGQ).

It belongs to the universal ribosomal protein uL16 family. In terms of assembly, part of the 50S ribosomal subunit.

Functionally, binds 23S rRNA and is also seen to make contacts with the A and possibly P site tRNAs. The polypeptide is Large ribosomal subunit protein uL16 (Alkaliphilus metalliredigens (strain QYMF)).